The following is a 307-amino-acid chain: Taste receptor type 2 member 10 (307 aa).

The Extracellular segment spans residues 1-6 (MLRVVE). A helical transmembrane segment spans residues 7 to 27 (GIFIFVVVSESVFGVLGNGFI). At 28 to 42 (GLVNCIDCAKNKLST) the chain is on the cytoplasmic side. The helical transmembrane segment at 43 to 63 (IGFILTGLAISRIFLIWIIIT) threads the bilayer. Topologically, residues 64-100 (DGFIQIFSPNIYASGNLIEYISYFWVIGNQSSMWFAT) are extracellular. A glycan (N-linked (GlcNAc...) asparagine) is linked at Asn-92. The helical transmembrane segment at 101–121 (SLSIFYFLKIANFSNYIFLWL) threads the bilayer. The Cytoplasmic segment spans residues 122–126 (KSRTN). Residues 127 to 147 (MVLPFMIVFLLISSLLNFAYI) traverse the membrane as a helical segment. The Extracellular segment spans residues 148-179 (AKILNDYKTKNDTVWDLNMYKSEYFIKQILLN). N-linked (GlcNAc...) asparagine glycosylation occurs at Asn-158. The chain crosses the membrane as a helical span at residues 180–200 (LGVIFFFTLSLITCIFLIISL). Residues 201–227 (WRHNRQMQSNVTGLRDSNTEAHVKAMK) lie on the Cytoplasmic side of the membrane. The helical transmembrane segment at 228-248 (VLISFIILFILYFIGMAIEIS) threads the bilayer. Topologically, residues 249-257 (CFTVRENKL) are extracellular. The helical transmembrane segment at 258 to 278 (LLMFGMTTTAIYPWGHSFILI) threads the bilayer. Topologically, residues 279 to 307 (LGNSKLKQASLRVLQQLKCCEKRKNLRVT) are cytoplasmic.

Belongs to the G-protein coupled receptor T2R family. As to expression, expressed in subsets of taste receptor cells of the tongue and palate epithelium and exclusively in gustducin-positive cells.

Its subcellular location is the membrane. In terms of biological role, gustducin-coupled strychnine receptor implicated in the perception of bitter compounds in the oral cavity and the gastrointestinal tract. Signals through PLCB2 and the calcium-regulated cation channel TRPM5. This is Taste receptor type 2 member 10 (TAS2R10) from Homo sapiens (Human).